A 166-amino-acid chain; its full sequence is NADH-ubiquinone oxidoreductase chain 6 (166 aa).

6 consecutive transmembrane segments (helical) span residues 4-24, 27-47, 50-70, 82-102, 109-129, and 135-155; these read FFSLVLVFLVLSVVVLGVVSA, QGVVALMGVSFFCCIFMVFLG, FAALVMYIVYLGGLVVVFGYC, VGGTKYFIVCVSLLLVVLLCL, LLVYVNWGDLVCLEMNGVGVF, and WGLIVCSWGLLVVLFSILVIL.

Belongs to the complex I subunit 6 family.

Its subcellular location is the mitochondrion membrane. The enzyme catalyses a ubiquinone + NADH + 5 H(+)(in) = a ubiquinol + NAD(+) + 4 H(+)(out). Functionally, core subunit of the mitochondrial membrane respiratory chain NADH dehydrogenase (Complex I) that is believed to belong to the minimal assembly required for catalysis. Complex I functions in the transfer of electrons from NADH to the respiratory chain. The immediate electron acceptor for the enzyme is believed to be ubiquinone. This is NADH-ubiquinone oxidoreductase chain 6 (MT-ND6) from Lycodon semicarinatus (Ryukyu odd-tooth snake).